The chain runs to 244 residues: Probable transcriptional regulatory protein XF_1906 (244 aa).

This sequence belongs to the TACO1 family.

The protein localises to the cytoplasm. This chain is Probable transcriptional regulatory protein XF_1906, found in Xylella fastidiosa (strain 9a5c).